Reading from the N-terminus, the 106-residue chain is Iron-sulfur cluster assembly protein CyaY (106 aa).

It belongs to the frataxin family.

Involved in iron-sulfur (Fe-S) cluster assembly. May act as a regulator of Fe-S biogenesis. The polypeptide is Iron-sulfur cluster assembly protein CyaY (Escherichia coli O139:H28 (strain E24377A / ETEC)).